Reading from the N-terminus, the 284-residue chain is Polyamine aminopropyltransferase (284 aa).

The PABS domain maps to 2 to 237; the sequence is ELWYTEKHTE…GHWLFGFASK (236 aa). Residue Gln31 participates in S-methyl-5'-thioadenosine binding. Residues His62 and Asp86 each contribute to the spermidine site. Residues Glu106 and 137–138 contribute to the S-methyl-5'-thioadenosine site; that span reads DG. Asp155 serves as the catalytic Proton acceptor. A spermidine-binding site is contributed by 155–158; that stretch reads DSTD. Residue Pro162 coordinates S-methyl-5'-thioadenosine.

It belongs to the spermidine/spermine synthase family. Homodimer or homotetramer.

It is found in the cytoplasm. It catalyses the reaction S-adenosyl 3-(methylsulfanyl)propylamine + putrescine = S-methyl-5'-thioadenosine + spermidine + H(+). Its pathway is amine and polyamine biosynthesis; spermidine biosynthesis; spermidine from putrescine: step 1/1. In terms of biological role, catalyzes the irreversible transfer of a propylamine group from the amino donor S-adenosylmethioninamine (decarboxy-AdoMet) to putrescine (1,4-diaminobutane) to yield spermidine. This Clostridium botulinum (strain Alaska E43 / Type E3) protein is Polyamine aminopropyltransferase.